A 60-amino-acid polypeptide reads, in one-letter code: Cytotoxin 1 (60 aa).

Disulfide bonds link C3/C21, C14/C38, C42/C53, and C54/C59.

Belongs to the three-finger toxin family. Short-chain subfamily. Type IA cytotoxin sub-subfamily. Monomer in solution; Homodimer and oligomer in the presence of negatively charged lipids forming a pore with a size ranging between 20 and 30 angstroms. As to expression, expressed by the venom gland.

It is found in the secreted. It localises to the target cell membrane. Basic protein that binds to cell membrane and depolarizes cardiomyocytes. This cytotoxin also possesses lytic activity on many other cells, including red blood cells. Interaction with sulfatides in the cell membrane induces pore formation and cell internalization and is responsible for cytotoxicity in cardiomyocytes. It targets the mitochondrial membrane and induces mitochondrial swelling and fragmentation. Inhibits protein kinases C. It binds to the integrin alpha-V/beta-3 with a moderate affinity. The protein is Cytotoxin 1 of Naja pallida (Red spitting cobra).